The chain runs to 508 residues: Dihydroniloticin synthase CYP71CD4 (508 aa).

Residues 6-26 (LDFFSVTSFIIFFLFLFRLVW) traverse the membrane as a helical segment. Cys449 is a binding site for heme.

It belongs to the cytochrome P450 family. Heme serves as cofactor. Mainly expressed in roots and, to a lesser extent, in stems.

The protein resides in the membrane. It catalyses the reaction tirucalla-7,24-dien-3beta-ol + 2 reduced [NADPH--hemoprotein reductase] + 2 O2 = dihydroniloticin + 2 oxidized [NADPH--hemoprotein reductase] + 2 H2O + 2 H(+). Its pathway is secondary metabolite biosynthesis; terpenoid biosynthesis. Its function is as follows. Monooxygenase involved in the biosynthesis of quassinoids triterpene natural products such as ailanthone, chaparrinone, glaucarubinone and amarolide, allelopathic degraded triterpene lactones inhibiting the growth of other plants, and possessing antimalarial, antifeedant, insecticidal, anti-inflammatory and anticancer activities. Catalyzes the conversion of tirucalladienol to dihydroniloticin. This chain is Dihydroniloticin synthase CYP71CD4, found in Ailanthus altissima (Tree-of-heaven).